A 357-amino-acid polypeptide reads, in one-letter code: 3-isopropylmalate dehydrogenase (357 aa).

Gly-75–Glu-88 is a binding site for NAD(+). 4 residues coordinate substrate: Arg-96, Arg-106, Arg-135, and Asp-224. 3 residues coordinate Mg(2+): Asp-224, Asp-248, and Asp-252. Residue Gly-282–Asn-294 participates in NAD(+) binding.

The protein belongs to the isocitrate and isopropylmalate dehydrogenases family. LeuB type 1 subfamily. In terms of assembly, homodimer. Mg(2+) serves as cofactor. Mn(2+) is required as a cofactor.

Its subcellular location is the cytoplasm. It catalyses the reaction (2R,3S)-3-isopropylmalate + NAD(+) = 4-methyl-2-oxopentanoate + CO2 + NADH. Its pathway is amino-acid biosynthesis; L-leucine biosynthesis; L-leucine from 3-methyl-2-oxobutanoate: step 3/4. Catalyzes the oxidation of 3-carboxy-2-hydroxy-4-methylpentanoate (3-isopropylmalate) to 3-carboxy-4-methyl-2-oxopentanoate. The product decarboxylates to 4-methyl-2 oxopentanoate. This Desulfotalea psychrophila (strain LSv54 / DSM 12343) protein is 3-isopropylmalate dehydrogenase.